A 512-amino-acid chain; its full sequence is Protein OS-9 homolog (512 aa).

The N-terminal stretch at 1–17 is a signal peptide; it reads MRRFNLILLASLQLVGA. A disordered region spans residues 71-91; sequence QAREADARDNEAENKDQDGPS. A compositionally biased stretch (basic and acidic residues) spans 73–88; that stretch reads READARDNEAENKDQD. An N-linked (GlcNAc...) asparagine glycan is attached at asparagine 118. An MRH domain is found at 149-288; that stretch reads DSCLYFMSGW…VVNTPRLCND (140 aa). Cysteine 151 and cysteine 164 are disulfide-bonded. Residues tryptophan 158, tryptophan 159, glutamine 171, aspartate 242, arginine 248, glutamate 270, and tyrosine 276 each contribute to the a mannooligosaccharide derivative site. 2 disulfides stabilise this stretch: cysteine 241–cysteine 274 and cysteine 256–cysteine 286. Disordered regions lie at residues 329 to 349 and 485 to 512; these read QVPL…PRDV and AAAK…KDEL. A compositionally biased stretch (acidic residues) spans 492 to 504; the sequence is DDEEEVVEGSEEQ. Residues 509–512 carry the Prevents secretion from ER motif; the sequence is KDEL.

It belongs to the OS-9 family. In terms of assembly, interacts with missfolded ER lumenal proteins.

Its subcellular location is the endoplasmic reticulum membrane. Functionally, lectin involved in the quality control of the secretory pathway. As a member of the endoplasmic reticulum-associated degradation lumenal (ERAD-L) surveillance system, targets misfolded endoplasmic reticulum lumenal glycoproteins for degradation. The polypeptide is Protein OS-9 homolog (YOS1) (Gibberella zeae (strain ATCC MYA-4620 / CBS 123657 / FGSC 9075 / NRRL 31084 / PH-1) (Wheat head blight fungus)).